Consider the following 673-residue polypeptide: NADH-quinone oxidoreductase chain 3 (673 aa).

A 2Fe-2S ferredoxin-type domain is found at 5–90; it reads RKIKIDDTII…PSEIRTNSPM (86 aa). The [2Fe-2S] cluster site is built by C37, C48, C51, and C66. Positions 90-129 constitute a 4Fe-4S His(Cys)3-ligated-type domain; it reads MVKKAREGVMEFLLINHPLDCPICDQGGECDLQDQAMAYG. Residues H106, C110, C113, C119, C158, C161, C164, and C208 each coordinate [4Fe-4S] cluster. Residues 227–283 form the 4Fe-4S Mo/W bis-MGD-type domain; that stretch reads LTKTESIDVMDALGSSIRIDTKGREVMRILPRNHDGVNEEWISDKTRFVWDGLRRQR.

The protein belongs to the complex I 75 kDa subunit family. NDH-1 is composed of at least 14 different subunits, Nqo1 to Nqo14. The complex has a L-shaped structure, with the hydrophobic arm (subunits Nqo7, Nqo8, Nqo10 to Nqo14) embedded in the inner membrane and the hydrophilic peripheral arm (subunits Nqo1 to Nqo6, Nqo9) protruding into the bacterial cytoplasm. The hydrophilic domain contains all the redox centers. Requires [2Fe-2S] cluster as cofactor. [4Fe-4S] cluster serves as cofactor.

The protein resides in the cell inner membrane. It catalyses the reaction a quinone + NADH + 5 H(+)(in) = a quinol + NAD(+) + 4 H(+)(out). Its function is as follows. NDH-1 shuttles electrons from NADH, via FMN and iron-sulfur (Fe-S) centers, to quinones in the respiratory chain. The immediate electron acceptor for the enzyme in this species is believed to be ubiquinone. Couples the redox reaction to proton translocation (for every two electrons transferred, four hydrogen ions are translocated across the cytoplasmic membrane), and thus conserves the redox energy in a proton gradient. The polypeptide is NADH-quinone oxidoreductase chain 3 (Paracoccus denitrificans).